The primary structure comprises 123 residues: Small ribosomal subunit protein uS12cz/uS12cy/uS12cx/uS12w (123 aa).

The span at 1–13 (MPTSNQLLRNSRQ) shows a compositional bias: polar residues. Residues 1 to 30 (MPTSNQLLRNSRQPVRKTKKTPALRGCPQR) are disordered. Residues 14–30 (PVRKTKKTPALRGCPQR) show a composition bias toward basic residues.

Belongs to the universal ribosomal protein uS12 family. As to quaternary structure, part of the 30S ribosomal subunit.

It localises to the plastid. The protein localises to the chloroplast. In terms of biological role, with S4 and S5 plays an important role in translational accuracy. Located at the interface of the 30S and 50S subunits. This is Small ribosomal subunit protein uS12cz/uS12cy/uS12cx/uS12w (rps12-A) from Pelargonium hortorum (Common geranium).